The primary structure comprises 793 residues: Putative dipeptidyl aminopeptidase C2E11.08 (793 aa).

Over 1–24 (MNDFSFEDKGLISRSGFGSRHVRR) the chain is Cytoplasmic. Residues 25-45 (VVKALALIFSLLILYLTISNV) traverse the membrane as a helical; Signal-anchor for type II membrane protein segment. Over 46-793 (SDSPPKRDSL…STGVRQHRWD (748 aa)) the chain is Lumenal. N-linked (GlcNAc...) asparagine glycans are attached at residues Asn-101, Asn-136, Asn-246, Asn-299, Asn-303, Asn-324, Asn-336, Asn-377, Asn-384, Asn-407, and Asn-535. Active-site charge relay system residues include Ser-647, Asp-722, and His-755. N-linked (GlcNAc...) asparagine glycosylation occurs at Asn-761.

It belongs to the peptidase S9B family.

It localises to the vacuole membrane. In Schizosaccharomyces pombe (strain 972 / ATCC 24843) (Fission yeast), this protein is Putative dipeptidyl aminopeptidase C2E11.08.